Here is a 179-residue protein sequence, read N- to C-terminus: Large ribosomal subunit protein uL5 (179 aa).

Belongs to the universal ribosomal protein uL5 family. As to quaternary structure, part of the 50S ribosomal subunit; part of the 5S rRNA/L5/L18/L25 subcomplex. Contacts the 5S rRNA and the P site tRNA. Forms a bridge to the 30S subunit in the 70S ribosome.

In terms of biological role, this is one of the proteins that bind and probably mediate the attachment of the 5S RNA into the large ribosomal subunit, where it forms part of the central protuberance. In the 70S ribosome it contacts protein S13 of the 30S subunit (bridge B1b), connecting the 2 subunits; this bridge is implicated in subunit movement. Contacts the P site tRNA; the 5S rRNA and some of its associated proteins might help stabilize positioning of ribosome-bound tRNAs. This is Large ribosomal subunit protein uL5 from Shewanella oneidensis (strain ATCC 700550 / JCM 31522 / CIP 106686 / LMG 19005 / NCIMB 14063 / MR-1).